A 379-amino-acid polypeptide reads, in one-letter code: Omega-3 fatty acid desaturase, endoplasmic reticulum (379 aa).

A helical transmembrane segment spans residues Leu52–Leu72. The Histidine box-1 motif lies at His97 to His101. Positions His133 to His137 match the Histidine box-2 motif. Helical transmembrane passes span Thr213–Leu233 and Phe236–Leu256. A Histidine box-3 motif is present at residues His300–His304.

The protein belongs to the fatty acid desaturase type 1 family.

The protein resides in the endoplasmic reticulum membrane. Its pathway is lipid metabolism; polyunsaturated fatty acid biosynthesis. Functionally, ER (microsomal) omega-3 fatty acid desaturase introduces the third double bond in the biosynthesis of 18:3 fatty acids, important constituents of plant membranes. It is thought to use cytochrome b5 as an electron donor and to act on fatty acids esterified to phosphatidylcholine and, possibly, other phospholipids. The protein is Omega-3 fatty acid desaturase, endoplasmic reticulum (FAD3) of Nicotiana tabacum (Common tobacco).